Reading from the N-terminus, the 240-residue chain is Short palate, lung and nasal epithelium carcinoma-associated protein 2B (240 aa).

The first 19 residues, 1–19 (MVQLWKLVLLCGLLAGTSA), serve as a signal peptide directing secretion. Cys163 and Cys206 are joined by a disulfide.

This sequence belongs to the BPI/LBP/Plunc superfamily. Plunc family. Parotid glands.

The protein localises to the secreted. The chain is Short palate, lung and nasal epithelium carcinoma-associated protein 2B (SPLUNC2B) from Bos taurus (Bovine).